The following is a 352-amino-acid chain: Molybdenum import ATP-binding protein ModC (352 aa).

Positions M1–E229 constitute an ABC transporter domain. G31 to T38 serves as a coordination point for ATP. The Mop domain occupies Q289–A352.

The protein belongs to the ABC transporter superfamily. Molybdate importer (TC 3.A.1.8) family. In terms of assembly, the complex is composed of two ATP-binding proteins (ModC), two transmembrane proteins (ModB) and a solute-binding protein (ModA).

It localises to the cell inner membrane. It catalyses the reaction molybdate(out) + ATP + H2O = molybdate(in) + ADP + phosphate + H(+). Part of the ABC transporter complex ModABC involved in molybdenum import. Responsible for energy coupling to the transport system. In Shigella flexneri, this protein is Molybdenum import ATP-binding protein ModC.